Consider the following 85-residue polypeptide: Three-finger toxin MALT0044C (85 aa).

The signal sequence occupies residues 1-21; sequence MKTLLLTLVVVTIVCLDLGNT. Intrachain disulfides connect cysteine 24–cysteine 45, cysteine 38–cysteine 63, cysteine 67–cysteine 78, and cysteine 79–cysteine 84.

It belongs to the three-finger toxin family. Short-chain subfamily. As to expression, expressed by the venom gland.

The protein localises to the secreted. This Micrurus altirostris (Uruguayan coral snake) protein is Three-finger toxin MALT0044C.